Reading from the N-terminus, the 405-residue chain is ATP phosphoribosyltransferase regulatory subunit (405 aa).

This sequence belongs to the class-II aminoacyl-tRNA synthetase family. HisZ subfamily. Heteromultimer composed of HisG and HisZ subunits.

The protein resides in the cytoplasm. The protein operates within amino-acid biosynthesis; L-histidine biosynthesis; L-histidine from 5-phospho-alpha-D-ribose 1-diphosphate: step 1/9. In terms of biological role, required for the first step of histidine biosynthesis. May allow the feedback regulation of ATP phosphoribosyltransferase activity by histidine. The sequence is that of ATP phosphoribosyltransferase regulatory subunit from Oceanobacillus iheyensis (strain DSM 14371 / CIP 107618 / JCM 11309 / KCTC 3954 / HTE831).